A 66-amino-acid chain; its full sequence is Large ribosomal subunit protein bL35 (66 aa).

It belongs to the bacterial ribosomal protein bL35 family.

The polypeptide is Large ribosomal subunit protein bL35 (Rhodopseudomonas palustris (strain BisB18)).